We begin with the raw amino-acid sequence, 237 residues long: Uridylate kinase (237 aa).

Position 12 to 15 (12 to 15) interacts with ATP; sequence KLSG. Positions 20 to 25 are involved in allosteric activation by GTP; the sequence is GDEGFG. Position 54 (G54) interacts with UMP. 2 residues coordinate ATP: G55 and R59. Residues D74 and 135–142 each bind UMP; that span reads TGSPFFTT. ATP-binding residues include T162, Y168, and D171.

This sequence belongs to the UMP kinase family. In terms of assembly, homohexamer.

Its subcellular location is the cytoplasm. The catalysed reaction is UMP + ATP = UDP + ADP. The protein operates within pyrimidine metabolism; CTP biosynthesis via de novo pathway; UDP from UMP (UMPK route): step 1/1. With respect to regulation, allosterically activated by GTP. Inhibited by UTP. In terms of biological role, catalyzes the reversible phosphorylation of UMP to UDP. This chain is Uridylate kinase, found in Actinobacillus pleuropneumoniae serotype 5b (strain L20).